Consider the following 293-residue polypeptide: Acetylglutamate kinase (293 aa).

Residues 68–69 (GG), R90, and N189 each bind substrate.

The protein belongs to the acetylglutamate kinase family. ArgB subfamily.

The protein localises to the cytoplasm. The enzyme catalyses N-acetyl-L-glutamate + ATP = N-acetyl-L-glutamyl 5-phosphate + ADP. It functions in the pathway amino-acid biosynthesis; L-arginine biosynthesis; N(2)-acetyl-L-ornithine from L-glutamate: step 2/4. Its function is as follows. Catalyzes the ATP-dependent phosphorylation of N-acetyl-L-glutamate. In Caldicellulosiruptor saccharolyticus (strain ATCC 43494 / DSM 8903 / Tp8T 6331), this protein is Acetylglutamate kinase.